The primary structure comprises 163 residues: Retinoic acid receptor responder protein 2 (163 aa).

The signal sequence occupies residues 1-20 (MRRLLIPLALWLGAVGVGVA). Disulfide bonds link Cys-77–Cys-87, Cys-98–Cys-117, and Cys-101–Cys-135. Positions 158–163 (KALPRS) are excised as a propeptide.

Post-translationally, secreted in an inactive precursor form, prochemerin, which is proteolytically processed by a variety of extracellular proteases to generate forms with differing levels of bioactivity. For example, the removal of six amino acids results in chemerin-157, which exhibits the highest activity, while removal of seven amino acids results in chemerin-156 which has slightly less activity. Some proteases are able to cleave at more than one site and chemerin forms may be sequentially processed by different enzymes to modulate activity levels. The coordinated expression and activity of chemerin-modifying enzymes is essential for regulating its bioactivation, inactivation and, consequently, biological function. Cathepsin G cleaves seven C-terminal amino acids from prochemerin (chemerin-156), elastase is able to cleave six (chemerin-157), eight (chemerin-155) or eleven (chemerin-152), plasmin cleaves five amino acids (chemerin-158), and tryptase cleaves five (chemerin-158) or eight (chemerin-155). Multiple cleavages might be required to fully activate chemerin, with an initial tryptase cleavage resulting in chemerin with low activity (chemerin-158), and a second cleavage by carboxypeptidase N or B producing highly active chemerin (chemerin-157).

It localises to the secreted. In terms of biological role, adipocyte-secreted protein (adipokine) that regulates adipogenesis, metabolism and inflammation through activation of the chemokine-like receptor 1 (CMKLR1). Also acts as a ligand for CMKLR2. Can also bind to C-C chemokine receptor-like 2 (CCRL2), but with a lower affinity than it does to CMKLR1 or CMKLR2. Positively regulates adipocyte differentiation, modulates the expression of adipocyte genes involved in lipid and glucose metabolism and might play a role in angiogenesis, a process essential for the expansion of white adipose tissue. Also acts as a pro-inflammatory adipokine, causing an increase in secretion of pro-inflammatory and prodiabetic adipokines, which further impair adipose tissue metabolic function and have negative systemic effects including impaired insulin sensitivity, altered glucose and lipid metabolism, and a decrease in vascular function in other tissues. Can have both pro- and anti-inflammatory properties depending on the modality of enzymatic cleavage by different classes of proteases. Acts as a chemotactic factor for leukocyte populations expressing CMKLR1, particularly immature plasmacytoid dendritic cells, but also immature myeloid DCs, macrophages and natural killer cells. Exerts an anti-inflammatory role by preventing TNF/TNFA-induced VCAM1 expression and monocytes adhesion in vascular endothelial cells. The effect is mediated via inhibiting activation of NF-kappa-B and CRK/p38 through stimulation of AKT1/NOS3 signaling and nitric oxide production. Exhibits an antimicrobial function in the skin. The polypeptide is Retinoic acid receptor responder protein 2 (RARRES2) (Pongo abelii (Sumatran orangutan)).